A 311-amino-acid chain; its full sequence is Acetyl-coenzyme A carboxylase carboxyl transferase subunit alpha (311 aa).

One can recognise a CoA carboxyltransferase C-terminal domain in the interval 36–286; it reads KLEKEVEKTF…KEYFIKSLAE (251 aa).

This sequence belongs to the AccA family. In terms of assembly, acetyl-CoA carboxylase is a heterohexamer composed of biotin carboxyl carrier protein (AccB), biotin carboxylase (AccC) and two subunits each of ACCase subunit alpha (AccA) and ACCase subunit beta (AccD).

The protein localises to the cytoplasm. It catalyses the reaction N(6)-carboxybiotinyl-L-lysyl-[protein] + acetyl-CoA = N(6)-biotinyl-L-lysyl-[protein] + malonyl-CoA. It participates in lipid metabolism; malonyl-CoA biosynthesis; malonyl-CoA from acetyl-CoA: step 1/1. Its function is as follows. Component of the acetyl coenzyme A carboxylase (ACC) complex. First, biotin carboxylase catalyzes the carboxylation of biotin on its carrier protein (BCCP) and then the CO(2) group is transferred by the carboxyltransferase to acetyl-CoA to form malonyl-CoA. In Aliarcobacter butzleri (strain RM4018) (Arcobacter butzleri), this protein is Acetyl-coenzyme A carboxylase carboxyl transferase subunit alpha.